The sequence spans 415 residues: PRKCA-binding protein (415 aa).

The PDZ domain maps to 22–105 (KVTLQKDAQN…EVTIHYNKLQ (84 aa)). The Zn(2+) site is built by C44 and C46. T82 is subject to Phosphothreonine. One can recognise an AH domain in the interval 144–357 (LCNDGLVKRL…CYAVLRDADV (214 aa)). The tract at residues 376 to 415 (EEFTDGEEEEEEEDTAAGEPSRDTRGAAGPLDKGGSWCDS) is disordered. Positions 377 to 391 (EFTDGEEEEEEEDTA) are enriched in acidic residues. C413 carries the S-palmitoyl cysteine; by DHHC8 lipid modification.

Monomer and homodimer. Interacts with CXADR. Interacts presynaptically with the glutamate receptors GRIA2, GRIA3, GRIK3, isoform 3 of GRIA4, isoform A of GRM4, GRM7 and GRM8; with NAPA and NAPB; and with BTG2. The interaction with NAPA and NAPB disrupts the interaction with GRIA2, conducting to the internalization of GRIA2. Interacts with PRKCA; with the amine transporters SLC6A2 and SLC6A3; with the channels ASIC1 and ASIC2; with the GTP-binding proteins ARF1 and ARF3; with the ephrin receptor tyrosine kinases EPHA7, EPHB1 and EPHB2; with ERBB2 and through its PDZ domain with the C-terminal tail of PRLHR. Interacts with UNC5A. Interacts (via AH domain) with NCS1/FREQ; in a calcium-dependent manner. Interacts with F-actin and associates with the ARP2/3 complex. Interacts (via PDZ domain) with ARF1 (activated); the interaction blocks Arp2/3 complex inhibition. Interacts with SORCS3. Post-translationally, phosphorylation at Thr-82 appears to inhibit the interaction with AMPA receptors. In terms of processing, palmitoylation on Cys-413 is essential for long-term synaptic depression (LTD). As to expression, ubiquitous.

It localises to the cytoplasm. The protein localises to the perinuclear region. The protein resides in the membrane. It is found in the postsynaptic density. Its subcellular location is the synapse. It localises to the synaptosome. The protein localises to the cytoskeleton. Its function is as follows. Probable adapter protein that bind to and organize the subcellular localization of a variety of membrane proteins containing some PDZ recognition sequence. Involved in the clustering of various receptors, possibly by acting at the receptor internalization level. Plays a role in synaptic plasticity by regulating the trafficking and internalization of AMPA receptors. May be regulated upon PRKCA activation. May regulate ASIC1/ASIC3 channel. Regulates actin polymerization by inhibiting the actin-nucleating activity of the Arp2/3 complex; the function is competitive with nucleation promoting factors and is linked to neuronal morphology regulation and AMPA receptor (AMPAR) endocytosis. Via interaction with the Arp2/3 complex involved in regulation of synaptic plasicity of excitatory synapses and required for spine shrinkage during long-term depression (LTD). Involved in regulation of astrocyte morphology, antagonistic to Arp2/3 complex activator WASL/N-WASP function. This is PRKCA-binding protein (PICK1) from Homo sapiens (Human).